A 327-amino-acid chain; its full sequence is Mitochondrial coenzyme A transporter SLC25A42 (327 aa).

3 Solcar repeats span residues 34 to 120, 132 to 217, and 227 to 315; these read KSIL…YKKL, LTPI…LKKL, and PYPF…TQIL. Helical transmembrane passes span 36 to 56, 92 to 112, 138 to 158, 189 to 209, 233 to 253, and 296 to 316; these read ILNS…AVAP, LWRG…IQFC, LLAG…LDLV, LYRG…ISFF, LLFG…LDVV, and VKGP…QILL.

Belongs to the mitochondrial carrier (TC 2.A.29) family.

Its subcellular location is the mitochondrion inner membrane. It carries out the reaction ADP(out) + CoA(in) = ADP(in) + CoA(out). The enzyme catalyses 3'-dephospho-CoA(in) + ADP(out) = 3'-dephospho-CoA(out) + ADP(in). The catalysed reaction is adenosine 3',5'-bisphosphate(in) + ADP(out) = adenosine 3',5'-bisphosphate(out) + ADP(in). It catalyses the reaction AMP(in) + ADP(out) = AMP(out) + ADP(in). It carries out the reaction dADP(in) + ADP(out) = dADP(out) + ADP(in). The enzyme catalyses ADP(in) + ATP(out) = ADP(out) + ATP(in). Mitochondrial carrier mediating the transport of coenzyme A (CoA) in mitochondria in exchange for intramitochondrial (deoxy)adenine nucleotides and adenosine 3',5'-diphosphate. This is Mitochondrial coenzyme A transporter SLC25A42 (slc25a42) from Xenopus tropicalis (Western clawed frog).